Consider the following 172-residue polypeptide: Adenine phosphoribosyltransferase (172 aa).

This sequence belongs to the purine/pyrimidine phosphoribosyltransferase family. In terms of assembly, homodimer.

It localises to the cytoplasm. The enzyme catalyses AMP + diphosphate = 5-phospho-alpha-D-ribose 1-diphosphate + adenine. The protein operates within purine metabolism; AMP biosynthesis via salvage pathway; AMP from adenine: step 1/1. In terms of biological role, catalyzes a salvage reaction resulting in the formation of AMP, that is energically less costly than de novo synthesis. This Staphylococcus saprophyticus subsp. saprophyticus (strain ATCC 15305 / DSM 20229 / NCIMB 8711 / NCTC 7292 / S-41) protein is Adenine phosphoribosyltransferase.